Consider the following 150-residue polypeptide: Putative pre-16S rRNA nuclease (150 aa).

It belongs to the YqgF nuclease family.

The protein localises to the cytoplasm. Functionally, could be a nuclease involved in processing of the 5'-end of pre-16S rRNA. This chain is Putative pre-16S rRNA nuclease, found in Chlamydia abortus (strain DSM 27085 / S26/3) (Chlamydophila abortus).